The sequence spans 353 residues: Histidinol-phosphate aminotransferase (353 aa).

The residue at position 211 (lysine 211) is an N6-(pyridoxal phosphate)lysine.

It belongs to the class-II pyridoxal-phosphate-dependent aminotransferase family. Histidinol-phosphate aminotransferase subfamily. In terms of assembly, homodimer. Pyridoxal 5'-phosphate is required as a cofactor.

The enzyme catalyses L-histidinol phosphate + 2-oxoglutarate = 3-(imidazol-4-yl)-2-oxopropyl phosphate + L-glutamate. It functions in the pathway amino-acid biosynthesis; L-histidine biosynthesis; L-histidine from 5-phospho-alpha-D-ribose 1-diphosphate: step 7/9. The chain is Histidinol-phosphate aminotransferase from Klebsiella pneumoniae subsp. pneumoniae (strain ATCC 700721 / MGH 78578).